Consider the following 119-residue polypeptide: MARVKRGVVARRRHKKVLKAAKGYYGARSRVFRVAKQAVIKAGQYAYRDRRVKKRNFRALWITRINAQSRAEGLSYSRLIAGLKKASIALDRRVLADLAIHDKTAFAAIVAKAQEALAA.

This sequence belongs to the bacterial ribosomal protein bL20 family.

Its function is as follows. Binds directly to 23S ribosomal RNA and is necessary for the in vitro assembly process of the 50S ribosomal subunit. It is not involved in the protein synthesizing functions of that subunit. The chain is Large ribosomal subunit protein bL20 from Saccharophagus degradans (strain 2-40 / ATCC 43961 / DSM 17024).